Reading from the N-terminus, the 93-residue chain is Cell division topological specificity factor (93 aa).

This sequence belongs to the MinE family.

Functionally, prevents the cell division inhibition by proteins MinC and MinD at internal division sites while permitting inhibition at polar sites. This ensures cell division at the proper site by restricting the formation of a division septum at the midpoint of the long axis of the cell. The protein is Cell division topological specificity factor of Agathobacter rectalis (strain ATCC 33656 / DSM 3377 / JCM 17463 / KCTC 5835 / VPI 0990) (Eubacterium rectale).